The primary structure comprises 612 residues: uncharacterized protein (612 aa).

The next 6 helical transmembrane spans lie at Ile13–Pro33, Ala38–Ala58, Thr67–Ile87, Gly107–Leu127, Leu144–Ser164, and Leu189–Leu209. RCK C-terminal domains are found at residues Gly218–Ile302 and Asn316–Leu403. The next 6 helical transmembrane spans lie at Ala419–Val439, Ile459–Thr479, Leu501–Leu521, Ala525–Pro545, Leu546–Tyr566, and Ile586–Tyr606.

It belongs to the SLC13A/DASS transporter (TC 2.A.47) family. NADC subfamily.

It is found in the cell membrane. This is an uncharacterized protein from Synechocystis sp. (strain ATCC 27184 / PCC 6803 / Kazusa).